Reading from the N-terminus, the 140-residue chain is UPF0306 protein YhbP (140 aa).

This sequence belongs to the UPF0306 family.

The sequence is that of UPF0306 protein YhbP from Escherichia coli O6:H1 (strain CFT073 / ATCC 700928 / UPEC).